Reading from the N-terminus, the 216-residue chain is Probable transaldolase (216 aa).

The active-site Schiff-base intermediate with substrate is the lysine 83.

It belongs to the transaldolase family. Type 3B subfamily.

The protein resides in the cytoplasm. It carries out the reaction D-sedoheptulose 7-phosphate + D-glyceraldehyde 3-phosphate = D-erythrose 4-phosphate + beta-D-fructose 6-phosphate. It participates in carbohydrate degradation; pentose phosphate pathway; D-glyceraldehyde 3-phosphate and beta-D-fructose 6-phosphate from D-ribose 5-phosphate and D-xylulose 5-phosphate (non-oxidative stage): step 2/3. In terms of biological role, transaldolase is important for the balance of metabolites in the pentose-phosphate pathway. The chain is Probable transaldolase from Thermoanaerobacter sp. (strain X514).